Here is a 129-residue protein sequence, read N- to C-terminus: Small ribosomal subunit protein uS11 (129 aa).

The protein belongs to the universal ribosomal protein uS11 family. In terms of assembly, part of the 30S ribosomal subunit. Interacts with proteins S7 and S18. Binds to IF-3.

Located on the platform of the 30S subunit, it bridges several disparate RNA helices of the 16S rRNA. Forms part of the Shine-Dalgarno cleft in the 70S ribosome. In Baumannia cicadellinicola subsp. Homalodisca coagulata, this protein is Small ribosomal subunit protein uS11.